Consider the following 492-residue polypeptide: Solute carrier family 2, facilitated glucose transporter member 1 (492 aa).

The residue at position 1 (M1) is an N-acetylmethionine. Topologically, residues M1 to R11 are cytoplasmic. Residues L12–I33 form a helical membrane-spanning segment. Over N34–S66 the chain is Extracellular. N45 is a glycosylation site (N-linked (GlcNAc...) asparagine). The helical transmembrane segment at L67–V87 threads the bilayer. At N88–F90 the chain is on the cytoplasmic side. A helical transmembrane segment spans residues G91–F112. The Extracellular portion of the chain corresponds to S113 to E120. A helical membrane pass occupies residues M121–V144. Topologically, residues G145 to A155 are cytoplasmic. A helical membrane pass occupies residues L156 to L176. A D-glucose-binding site is contributed by Q161. At D177 to L185 the chain is on the extracellular side. Residues W186–F206 form a helical membrane-spanning segment. Residues C207–P271 lie on the Cytoplasmic side of the membrane. At S226 the chain carries Phosphoserine. A helical membrane pass occupies residues I272–Y293. D-glucose-binding positions include Q282 to Q283 and N288. The Extracellular portion of the chain corresponds to S294–P306. A helical membrane pass occupies residues V307–V328. N317 is a binding site for D-glucose. The Cytoplasmic portion of the chain corresponds to E329–R334. A helical membrane pass occupies residues T335–L355. Residues A356–S365 are Extracellular-facing. Residues Y366–W388 form a helical membrane-spanning segment. Residues E380 and W388 each contribute to the D-glucose site. Topologically, residues F389–P401 are cytoplasmic. Residues A402–F422 traverse the membrane as a helical segment. Topologically, residues Q423–C429 are extracellular. The helical transmembrane segment at G430–F450 threads the bilayer. Topologically, residues K451–V492 are cytoplasmic. Phosphoserine is present on S465. A disordered region spans residues R468–V492. The residue at position 478 (T478) is a Phosphothreonine. S490 carries the phosphoserine modification.

The protein belongs to the major facilitator superfamily. Sugar transporter (TC 2.A.1.1) family. Glucose transporter subfamily. In terms of assembly, found in a complex with ADD2, DMTN and SLC2A1. Interacts (via C-terminus cytoplasmic region) with DMTN. Interacts with SNX27; the interaction is required when endocytosed to prevent degradation in lysosomes and promote recycling to the plasma membrane. Interacts with STOM. Interacts with GIPC (via PDZ domain). Interacts with SGTA (via Gln-rich region). Interacts with isoform 1 of BSG. Interacts with SMIM43; the interaction may promote SLC2A1-mediated glucose transport to meet the energy needs of mesendoderm differentiation. Phosphorylation at Ser-226 by PKC promotes glucose uptake by increasing cell membrane localization. In terms of tissue distribution, detected in osteoblastic cells (at protein level). Detected in brain, and at lower levels in kidney, heart and lung.

It localises to the cell membrane. The protein localises to the photoreceptor inner segment. It catalyses the reaction D-glucose(out) = D-glucose(in). With respect to regulation, the uptake of glucose is inhibited by cytochalasin B. Glucose uptake is increased in response to phorbol ester 12-O-tetradecanoylphorbol-13-acetate (TPA) treatment: TPA-induced glucose uptake requires phosphorylation at Ser-226. Functionally, facilitative glucose transporter, which is responsible for constitutive or basal glucose uptake. Has a very broad substrate specificity; can transport a wide range of aldoses including both pentoses and hexoses. Most important energy carrier of the brain: present at the blood-brain barrier and assures the energy-independent, facilitative transport of glucose into the brain. In association with BSG and NXNL1, promotes retinal cone survival by increasing glucose uptake into photoreceptors. Required for mesendoderm differentiation. The chain is Solute carrier family 2, facilitated glucose transporter member 1 from Rattus norvegicus (Rat).